The sequence spans 173 residues: dCTP deaminase, dUMP-forming (173 aa).

DCTP contacts are provided by residues 93–98, aspartate 111, 119–121, and glutamine 138; these read RSSIGR and TLE. The active-site Proton donor/acceptor is the glutamate 121.

Belongs to the dCTP deaminase family. As to quaternary structure, homotrimer.

It catalyses the reaction dCTP + 2 H2O = dUMP + NH4(+) + diphosphate. It participates in pyrimidine metabolism; dUMP biosynthesis; dUMP from dCTP: step 1/1. Its function is as follows. Bifunctional enzyme that catalyzes both the deamination of dCTP to dUTP and the hydrolysis of dUTP to dUMP without releasing the toxic dUTP intermediate. The chain is dCTP deaminase, dUMP-forming from Leptospira interrogans serogroup Icterohaemorrhagiae serovar copenhageni (strain Fiocruz L1-130).